A 374-amino-acid polypeptide reads, in one-letter code: Glutamine synthetase (374 aa).

Residues 2–25 (TTSASSHLNKGIKQVYMSLPQGEK) form a required for glutamine-induced ubiquitination by CRL4(CRBN) and proteasomal degradation region. An N6-acetyllysine mark is found at Lys-11 and Lys-14. Residues 24–106 (EKVQAMYIWI…VLCESFQVQF (83 aa)) enclose the GS beta-grasp domain. One can recognise a GS catalytic domain in the interval 114 to 374 (LRHTCKRIMD…TGDEPFQYKN (261 aa)). Position 135 (Glu-135) interacts with ATP. Positions 135, 137, 197, and 204 each coordinate Mn(2+). 204–209 (EFQIGP) provides a ligand contact to ATP. Position 247 to 248 (247 to 248 (NW)) interacts with L-glutamate. Residue His-254 coordinates Mn(2+). Residues 256–258 (NFS), Arg-320, and Arg-325 contribute to the ATP site. Arg-320 is a binding site for L-glutamate. 337–339 (YFE) is a binding site for ADP. Glu-339 is a Mn(2+) binding site. Arg-341 lines the L-glutamate pocket. At Ser-344 the chain carries Phosphoserine.

Belongs to the glutamine synthetase family. In terms of assembly, decamer; composed of two pentamers. Interacts with PALMD. Interacts with RHOJ. Interacts with BEST2; this interaction tethers a fraction of GLUL to the membrane, causing a decrease of cytosolic glutamine synthase (GS) activity and inhibits the chloride channel activity of BEST2 by affecting the gating at the aperture in the absence of intracellular glutamate. Mg(2+) serves as cofactor. The cofactor is Mn(2+). In terms of processing, palmitoylated; undergoes autopalmitoylation. Acetylated by EP300/p300; acetylation is stimulated by increased glutamine levels and promotes ubiquitin-mediated proteasomal degradation. Post-translationally, ubiquitinated by ZNRF1. Ubiquitinated by the DCX (DDB1-CUL4-X-box) E3 ubiquitin-protein ligase complex called CRL4(CRBN), leading to proteasomal degradation.

Its subcellular location is the cytoplasm. It localises to the cytosol. The protein localises to the microsome. The protein resides in the mitochondrion. It is found in the cell membrane. It catalyses the reaction L-glutamate + NH4(+) + ATP = L-glutamine + ADP + phosphate + H(+). The enzyme catalyses L-cysteinyl-[protein] + hexadecanoyl-CoA = S-hexadecanoyl-L-cysteinyl-[protein] + CoA. Its activity is regulated as follows. Glutamine synthetase activity is inhibited by methionine sulfoximine (MSO). Functionally, glutamine synthetase that catalyzes the ATP-dependent conversion of glutamate and ammonia to glutamine. Its role depends on tissue localization: in the brain, it regulates the levels of toxic ammonia and converts neurotoxic glutamate to harmless glutamine, whereas in the liver, it is one of the enzymes responsible for the removal of ammonia. Plays a key role in ammonium detoxification during erythropoiesis: the glutamine synthetase activity is required to remove ammonium generated by porphobilinogen deaminase (HMBS) during heme biosynthesis to prevent ammonium accumulation and oxidative stress. Essential for proliferation of fetal skin fibroblasts. Independently of its glutamine synthetase activity, required for endothelial cell migration during vascular development. Involved in angiogenesis by regulating membrane localization and activation of the GTPase RHOJ, possibly by promoting RHOJ palmitoylation. May act as a palmitoyltransferase for RHOJ: able to autopalmitoylate and then transfer the palmitoyl group to RHOJ. Plays a role in ribosomal 40S subunit biogenesis. Through the interaction with BEST2, inhibits BEST2 channel activity by affecting the gating at the aperture in the absence of intracellular L-glutamate, but sensitizes BEST2 to intracellular L-glutamate, which promotes the opening of BEST2 and thus relieves its inhibitory effect on BEST2. This Macaca fascicularis (Crab-eating macaque) protein is Glutamine synthetase.